The sequence spans 162 residues: UPF0114 protein SO_3997 (162 aa).

3 consecutive transmembrane segments (helical) span residues 10–32 (YASRWIMAPIYLGLSLVLLGLGI), 53–75 (LVLVTLSLIDITLVGGLIVMVMF), and 136–156 (IMWYLLIHITFVLSAFAMGYL).

The protein belongs to the UPF0114 family.

Its subcellular location is the cell membrane. This Shewanella oneidensis (strain ATCC 700550 / JCM 31522 / CIP 106686 / LMG 19005 / NCIMB 14063 / MR-1) protein is UPF0114 protein SO_3997.